The sequence spans 570 residues: MKVSLLAVLLLSIVAATYGQGECGSNPCENGSVCRDGEGTYICECQMGYDGQNCDRFTGANCGYNIFESTGVIESPNYPANYNNRADCLYLVRIKGARVITFTIEDFATEIFKDAVEYGVGPVADFNQALATFEGNLTANNQVPPPFSVQGEQAWFIFSTDRNIPRKGFRITFSSDGDDCTPNPCLNGATCVDQVNDYQCICAPGFTGDNCETDIDECASAPCRNGGACVDQVNGYTCNCIPGFNGVNCENNINECASIPCLNGGICVDGINQFACTCLPGYTGILCETDINECASSPCQNGGSCTDAVNRYTCDCRAGFTGSNCETNINECASSPCLNGGSCLDGVDGYVCQCLPNYTGTHCEISLDACASLPCQNGGVCTNVGGDYVCECLPGYTGINCEIDINECASLPCQNGGECINGIAMYICQCRQGYAGVNCEEVGFCDLEGVWFNECNDQITIIKTSTGMMLGDHMTFTERELGVAAPTVMVGYPSNNYDFPSFGITVVRDNGRTTTSWTGQCHLCDGQEVLYTTWIESSMVSTCEEIKRANKVGQDKWTRYEQSFAPQPDA.

The N-terminal stretch at 1–17 (MKVSLLAVLLLSIVAAT) is a signal peptide. One can recognise an EGF-like 1 domain in the interval 18-55 (YGQGECGSNPCENGSVCRDGEGTYICECQMGYDGQNCD). Intrachain disulfides connect Cys-23–Cys-34, Cys-28–Cys-43, Cys-45–Cys-54, and Cys-62–Cys-88. Asn-30 carries N-linked (GlcNAc...) asparagine glycosylation. Residues 62–175 (CGYNIFESTG…RKGFRITFSS (114 aa)) form the CUB domain. A glycan (N-linked (GlcNAc...) asparagine) is linked at Asn-136. An EGF-like 2; calcium-binding domain is found at 176 to 212 (DGDDCTPNPCLNGATCVDQVNDYQCICAPGFTGDNCE). Disulfide bonds link Cys-180–Cys-191, Cys-185–Cys-200, Cys-202–Cys-211, Cys-218–Cys-229, Cys-223–Cys-238, Cys-240–Cys-249, Cys-256–Cys-267, Cys-261–Cys-276, Cys-278–Cys-287, Cys-294–Cys-305, Cys-299–Cys-314, Cys-316–Cys-325, Cys-332–Cys-343, Cys-337–Cys-352, Cys-354–Cys-363, Cys-370–Cys-381, Cys-375–Cys-390, Cys-392–Cys-401, Cys-408–Cys-419, Cys-413–Cys-428, Cys-430–Cys-439, and Cys-445–Cys-521. Residues 214 to 250 (DIDECASAPCRNGGACVDQVNGYTCNCIPGFNGVNCE) enclose the EGF-like 3; calcium-binding domain. Residues 252-288 (NINECASIPCLNGGICVDGINQFACTCLPGYTGILCE) form the EGF-like 4; calcium-binding domain. One can recognise an EGF-like 5; calcium-binding domain in the interval 290–326 (DINECASSPCQNGGSCTDAVNRYTCDCRAGFTGSNCE). Residues 328–364 (NINECASSPCLNGGSCLDGVDGYVCQCLPNYTGTHCE) form the EGF-like 6; calcium-binding domain. N-linked (GlcNAc...) asparagine glycosylation is present at Asn-357. Positions 366-402 (SLDACASLPCQNGGVCTNVGGDYVCECLPGYTGINCE) constitute an EGF-like 7 domain. One can recognise an EGF-like 8; calcium-binding domain in the interval 404-440 (DINECASLPCQNGGECINGIAMYICQCRQGYAGVNCE). The region spanning 443-562 (GFCDLEGVWF…GQDKWTRYEQ (120 aa)) is the Avidin-like domain.

In terms of assembly, homotetramer.

Its subcellular location is the secreted. It localises to the extracellular space. Its function is as follows. Forms the apical lamina, a component of the extracellular matrix. This chain is Fibropellin-3 (EGF3), found in Strongylocentrotus purpuratus (Purple sea urchin).